Here is a 906-residue protein sequence, read N- to C-terminus: Coatomer subunit beta' (906 aa).

WD repeat units lie at residues 13 to 52 (ARSD…LVKT), 55 to 94 (VCDL…RVHM), 97 to 136 (AHSD…SCSQ), 140 to 180 (GHTH…PNFT), 183 to 224 (GHEK…CVQT), 227 to 266 (GHAQ…LEST), 350 to 388 (SCEI…NKSF), and 390 to 425 (SAQE…KSFK). Lys-627 is modified (N6-acetyllysine). The stretch at 746–783 (IRTGRLPEAAFLARTYLPSQVSRVVKLWRENLSKVNQK) is one WD 9 repeat. Residues 837 to 862 (EEAKGFQPSRSTAQQELDGKPASPTP) are disordered. Position 859 is a phosphoserine (Ser-859). The residue at position 861 (Thr-861) is a Phosphothreonine. Positions 866-890 (ASHTANKEEKSLLELEVDLDNLELE) form a coiled coil.

It belongs to the WD repeat COPB2 family. In terms of assembly, oligomeric complex that consists of at least the alpha, beta, beta', gamma, delta, epsilon and zeta subunits. Probably interacts with PEX11A. Interacts with SCYL1. Interacts with JAGN1.

Its subcellular location is the cytoplasm. The protein localises to the cytosol. It is found in the golgi apparatus membrane. It localises to the cytoplasmic vesicle. The protein resides in the COPI-coated vesicle membrane. Its function is as follows. The coatomer is a cytosolic protein complex that binds to dilysine motifs and reversibly associates with Golgi non-clathrin-coated vesicles, which further mediate biosynthetic protein transport from the ER, via the Golgi up to the trans Golgi network. Coatomer complex is required for budding from Golgi membranes, and is essential for the retrograde Golgi-to-ER transport of dilysine-tagged proteins. In mammals, the coatomer can only be recruited by membranes associated to ADP-ribosylation factors (ARFs), which are small GTP-binding proteins; the complex also influences the Golgi structural integrity, as well as the processing, activity, and endocytic recycling of LDL receptors. In terms of biological role, this coatomer complex protein, essential for Golgi budding and vesicular trafficking, is a selective binding protein (RACK) for protein kinase C, epsilon type. It binds to Golgi membranes in a GTP-dependent manner. The polypeptide is Coatomer subunit beta' (COPB2) (Macaca fascicularis (Crab-eating macaque)).